The chain runs to 172 residues: MVKNIEFPKCVVFDLDYTLWPLWIDTHVTAPFKPSKNDPGVLIDKYGTEICFYSDITGILQELRNQKVTLCVASRTCAPKYAKQALNLMKVPIDGSLKPAIEFFTYVKAWPGSKMDHFKEIHNESGIDYREMVFFDDESRNREVERLGVTFLEKIKKNSLNILSFLKNHMHG.

Residue aspartate 14 is the Nucleophile of the active site. 3 residues coordinate Mg(2+): aspartate 14, aspartate 16, and aspartate 137. Aspartate 16 functions as the Proton donor in the catalytic mechanism.

The protein belongs to the HAD-like hydrolase superfamily.

It is found in the cytoplasm. It localises to the nucleus. In Schizosaccharomyces pombe (strain 972 / ATCC 24843) (Fission yeast), this protein is HAD-like hydrolase superfamily protein P8B7.31.